Consider the following 261-residue polypeptide: UPF0246 protein Daci_5283 (261 aa).

Belongs to the UPF0246 family.

The polypeptide is UPF0246 protein Daci_5283 (Delftia acidovorans (strain DSM 14801 / SPH-1)).